A 146-amino-acid chain; its full sequence is Peptide methionine sulfoxide reductase MsrB (146 aa).

In terms of domain architecture, MsrB spans 2–125 (LKKNKDELND…NSAAVQFIPY (124 aa)). The Nucleophile role is filled by Cys114.

Belongs to the MsrB Met sulfoxide reductase family.

The enzyme catalyses L-methionyl-[protein] + [thioredoxin]-disulfide + H2O = L-methionyl-(R)-S-oxide-[protein] + [thioredoxin]-dithiol. In Staphylococcus carnosus (strain TM300), this protein is Peptide methionine sulfoxide reductase MsrB.